Reading from the N-terminus, the 84-residue chain is MARKPASSQDFETTLAQLENIVTHLENGDLPLEEALKEFEQGVQLAKLGQERLQQAEQRIQILLQKTEDAPLNDYKGNDYEGNA.

It belongs to the XseB family. Heterooligomer composed of large and small subunits.

The protein resides in the cytoplasm. The enzyme catalyses Exonucleolytic cleavage in either 5'- to 3'- or 3'- to 5'-direction to yield nucleoside 5'-phosphates.. In terms of biological role, bidirectionally degrades single-stranded DNA into large acid-insoluble oligonucleotides, which are then degraded further into small acid-soluble oligonucleotides. This Haemophilus influenzae (strain 86-028NP) protein is Exodeoxyribonuclease 7 small subunit.